The following is a 210-amino-acid chain: Calcium-activated potassium channel subunit beta-4 (210 aa).

Residues 1-19 (MAKLRVSYEYTEAEDKSIR) are Cytoplasmic-facing. A helical membrane pass occupies residues 20 to 40 (LGLFLIVSGILSLFIFGFCWL). Over 41–167 (SPALQDLQAT…DVLLQRTHDE (127 aa)) the chain is Extracellular. Residues asparagine 53 and asparagine 90 are each glycosylated (N-linked (GlcNAc...) asparagine). A helical membrane pass occupies residues 168–188 (IVLLHCFLWPVVAFVVGVLIV). The Cytoplasmic segment spans residues 189–210 (VLTICAKSLAVKAEAMKKRKFS).

This sequence belongs to the KCNMB (TC 8.A.14.1) family. KCNMB4 subfamily. Interacts with KCNMA1 tetramer. There are probably 4 molecules of KCMNB4 per KCNMA1 tetramer. Interacts with FMR1 (via N-terminus). Post-translationally, phosphorylated. Phosphorylation modulates its effect on KCNMA1 activation kinetics. N-glycosylated. A highly glycosylated form is promoted by KCNMA1. Glycosylation, which is not required for the interaction with KCNMA1 and subcellular location, increases protection against charybdotoxin.

It is found in the membrane. Functionally, regulatory subunit of the calcium activated potassium KCNMA1 (maxiK) channel. Modulates the calcium sensitivity and gating kinetics of KCNMA1, thereby contributing to KCNMA1 channel diversity. Decreases the gating kinetics and calcium sensitivity of the KCNMA1 channel, but with fast deactivation kinetics. May decrease KCNMA1 channel openings at low calcium concentrations but increases channel openings at high calcium concentrations. Makes KCNMA1 channel resistant to 100 nM charybdotoxin (CTX) toxin concentrations. The polypeptide is Calcium-activated potassium channel subunit beta-4 (Kcnmb4) (Rattus norvegicus (Rat)).